A 166-amino-acid chain; its full sequence is NAD(P)H-quinone oxidoreductase subunit I, chloroplastic (166 aa).

2 4Fe-4S ferredoxin-type domains span residues glycine 55–lysine 84 and leucine 95–glutamate 124. Cysteine 64, cysteine 67, cysteine 70, cysteine 74, cysteine 104, cysteine 107, cysteine 110, and cysteine 114 together coordinate [4Fe-4S] cluster.

Belongs to the complex I 23 kDa subunit family. NDH is composed of at least 16 different subunits, 5 of which are encoded in the nucleus. The cofactor is [4Fe-4S] cluster.

It is found in the plastid. It localises to the chloroplast thylakoid membrane. The enzyme catalyses a plastoquinone + NADH + (n+1) H(+)(in) = a plastoquinol + NAD(+) + n H(+)(out). It carries out the reaction a plastoquinone + NADPH + (n+1) H(+)(in) = a plastoquinol + NADP(+) + n H(+)(out). In terms of biological role, NDH shuttles electrons from NAD(P)H:plastoquinone, via FMN and iron-sulfur (Fe-S) centers, to quinones in the photosynthetic chain and possibly in a chloroplast respiratory chain. The immediate electron acceptor for the enzyme in this species is believed to be plastoquinone. Couples the redox reaction to proton translocation, and thus conserves the redox energy in a proton gradient. The protein is NAD(P)H-quinone oxidoreductase subunit I, chloroplastic of Hofmeisteria fasciculata (Helogyne fasciculata).